The chain runs to 147 residues: Ubiquitin-conjugating enzyme E2-16 kDa (147 aa).

In terms of domain architecture, UBC core spans 1–147; that stretch reads MAFKRINKEL…AREWTRKYAI (147 aa). Catalysis depends on C107, which acts as the Glycyl thioester intermediate.

It belongs to the ubiquitin-conjugating enzyme family.

It carries out the reaction S-ubiquitinyl-[E1 ubiquitin-activating enzyme]-L-cysteine + [E2 ubiquitin-conjugating enzyme]-L-cysteine = [E1 ubiquitin-activating enzyme]-L-cysteine + S-ubiquitinyl-[E2 ubiquitin-conjugating enzyme]-L-cysteine.. Its pathway is protein modification; protein ubiquitination. Catalyzes the covalent attachment of ubiquitin to other proteins. May also mediate selective proteolysis pathways. This chain is Ubiquitin-conjugating enzyme E2-16 kDa (UBC1), found in Colletotrichum gloeosporioides (Anthracnose fungus).